The primary structure comprises 576 residues: Calmodulin-binding protein 60 B (576 aa).

The interval 1–25 (MMLPTKRPAPDHGDDERNEVMVPEP) is disordered. Residues 1 to 80 (MMLPTKRPAP…HPSSRPSLNR (80 aa)) form a calmodulin-binding region. The span at 8 to 25 (PAPDHGDDERNEVMVPEP) shows a compositional bias: basic and acidic residues. The segment at 150-273 (DERQDWTENE…AFHKRLAYKN (124 aa)) is DNA-binding.

This sequence belongs to the plant ACBP60 protein family. In terms of assembly, (Microbial infection) Interacts with V.dahliae SCP41. As to quaternary structure, interacts with calmodulin (CaM).

The protein localises to the nucleus. In terms of biological role, transcription activator that binds DNA in a sequence-specific manner, likely 5'-GAAATTTTGG-3', to promote the expression of target genes. Required for pathogen resistance. This is Calmodulin-binding protein 60 B from Gossypium hirsutum (Upland cotton).